Consider the following 159-residue polypeptide: Protein Smg homolog (159 aa).

This sequence belongs to the Smg family.

This chain is Protein Smg homolog, found in Vibrio parahaemolyticus serotype O3:K6 (strain RIMD 2210633).